Reading from the N-terminus, the 468-residue chain is ATP synthase subunit beta (468 aa).

ATP is bound at residue 148-155 (GGAGVGKT).

The protein belongs to the ATPase alpha/beta chains family. As to quaternary structure, F-type ATPases have 2 components, CF(1) - the catalytic core - and CF(0) - the membrane proton channel. CF(1) has five subunits: alpha(3), beta(3), gamma(1), delta(1), epsilon(1). CF(0) has three main subunits: a(1), b(2) and c(9-12). The alpha and beta chains form an alternating ring which encloses part of the gamma chain. CF(1) is attached to CF(0) by a central stalk formed by the gamma and epsilon chains, while a peripheral stalk is formed by the delta and b chains.

It is found in the cell inner membrane. It catalyses the reaction ATP + H2O + 4 H(+)(in) = ADP + phosphate + 5 H(+)(out). Functionally, produces ATP from ADP in the presence of a proton gradient across the membrane. The catalytic sites are hosted primarily by the beta subunits. This is ATP synthase subunit beta from Xanthomonas oryzae pv. oryzae (strain KACC10331 / KXO85).